The following is a 55-amino-acid chain: Large ribosomal subunit protein bL33 (55 aa).

Belongs to the bacterial ribosomal protein bL33 family.

This Polaromonas sp. (strain JS666 / ATCC BAA-500) protein is Large ribosomal subunit protein bL33.